We begin with the raw amino-acid sequence, 327 residues long: Geranylgeranyl transferase type-2 subunit alpha (327 aa).

5 PFTA repeats span residues 44–78, 84–118, 123–157, 163–197, and 207–241; these read YSIE…SLAS, FWDK…HYPT, VWQT…NIES, LDKE…RMFQ, and YIRT…NDIV.

This sequence belongs to the protein prenyltransferase subunit alpha family. Heterodimer of an alpha and a beta subunit.

The enzyme catalyses geranylgeranyl diphosphate + L-cysteinyl-[protein] = S-geranylgeranyl-L-cysteinyl-[protein] + diphosphate. In terms of biological role, catalyzes the transfer of a geranyl-geranyl moiety from geranyl-geranyl pyrophosphate to proteins having the C-terminal -XCC or -XCXC, where both cysteines may become modified. Acts on YPT1 and SEC4. In Saccharomyces cerevisiae (strain ATCC 204508 / S288c) (Baker's yeast), this protein is Geranylgeranyl transferase type-2 subunit alpha (BET4).